The following is a 521-amino-acid chain: MDVANLASQLNATTILPEGVLVISLILVLLGDITFGRSSAKWTPYLAIASLAACLYLLYTQWDQANPIGFLGSFNADNLSIVFRAIIALSTLVTILMSVRYIEQSGSSIGEFMTVLLTATVGAMFLCGAEELVMIFISLETLSIASYLMTGYMKRDSRSNEAALKYLLIGAASSAVFLYGLSLLYGLSGGKTHLDDIALALTDTSKSLALVISLVFVIASVSFKIAAVPFHQWTPDVYEGSPTPVVAFLSVGSKAAGFALAIRLLTQAFPNLVEQWQFIFTALAILSMVLGNVVAIAQTSMKRMLAYSSIGQAGFVMIGLVIGTEAGYASMVFYLLIYLFMNLGAFTCVILFSLRTGTDEIGDYAGLYLKDPLLTLALSLCLLSLGGIPPLAGFFGKLYLFWAGWQAGAYGLVLLGLITSVVSIYYYIRVIKMMVVKEPQDMSEVIKNYPSIVWKPLGMRPLQVGLVLTLIATSLAGVLSNPLLTIVNSSVADVPRFKQATIPTSIDVAIQPDTPTIAPEL.

The next 14 membrane-spanning stretches (helical) occupy residues 15 to 35, 42 to 62, 79 to 99, 109 to 126, 131 to 153, 167 to 187, 208 to 228, 242 to 262, 276 to 296, 304 to 324, 332 to 352, 376 to 396, 398 to 418, and 464 to 484; these read ILPEGVLVISLILVLLGDITF, WTPYLAIASLAACLYLLYTQW, LSIVFRAIIALSTLVTILMSV, IGEFMTVLLTATVGAMFL, ELVMIFISLETLSIASYLMTGYM, LLIGAASSAVFLYGLSLLYGL, LALVISLVFVIASVSFKIAAV, PTPVVAFLSVGSKAAGFALAI, WQFIFTALAILSMVLGNVVAI, MLAYSSIGQAGFVMIGLVIGT, VFYLLIYLFMNLGAFTCVILF, LALSLCLLSLGGIPPLAGFFG, LYLFWAGWQAGAYGLVLLGLI, and VGLVLTLIATSLAGVLSNPLL.

Belongs to the complex I subunit 2 family. As to quaternary structure, NDH-1 can be composed of about 15 different subunits; different subcomplexes with different compositions have been identified which probably have different functions.

The protein localises to the cellular thylakoid membrane. The enzyme catalyses a plastoquinone + NADH + (n+1) H(+)(in) = a plastoquinol + NAD(+) + n H(+)(out). It carries out the reaction a plastoquinone + NADPH + (n+1) H(+)(in) = a plastoquinol + NADP(+) + n H(+)(out). NDH-1 shuttles electrons from an unknown electron donor, via FMN and iron-sulfur (Fe-S) centers, to quinones in the respiratory and/or the photosynthetic chain. The immediate electron acceptor for the enzyme in this species is believed to be plastoquinone. Couples the redox reaction to proton translocation, and thus conserves the redox energy in a proton gradient. Cyanobacterial NDH-1 also plays a role in inorganic carbon-concentration. The chain is NAD(P)H-quinone oxidoreductase subunit 2 from Acaryochloris marina (strain MBIC 11017).